The following is a 648-amino-acid chain: Centrosomal protein of 63 kDa-B (648 aa).

2 coiled-coil regions span residues 19–188 and 222–555; these read DSCE…QSHN and EEEL…DAAS. At serine 559 the chain carries Phosphoserine; by atm and atr. Residues 611–644 adopt a coiled-coil conformation; the sequence is FLQEEEQRSHELLQRLNAHIEELKQESQRTVEHF.

This sequence belongs to the CEP63 family. Post-translationally, phosphorylation at Ser-559 by atm and atr promotes its delocalization from the centrosome and impairs its ability to promote centrosome dependent spindle assembly.

It localises to the cytoplasm. The protein resides in the cytoskeleton. It is found in the microtubule organizing center. The protein localises to the centrosome. Its subcellular location is the centriole. Functionally, required for normal spindle assembly. Plays a key role in mother-centriole-dependent centriole duplication. Plays a role in DNA damage response. Following DNA damage, such as double-strand breaks (DSBs), is removed from centrosomes; this leads to the inactivation of spindle assembly and delay in mitotic progression. The chain is Centrosomal protein of 63 kDa-B (cep63-b) from Xenopus laevis (African clawed frog).